Here is a 604-residue protein sequence, read N- to C-terminus: Putative O-acetyltransferase SAR0937 (604 aa).

The next 11 membrane-spanning stretches (helical) occupy residues 15–35 (YMPG…IYHL), 43–63 (GFLG…SLLL), 85–105 (LLPA…LLKS), 150–170 (AIEE…LLTI), 176–196 (IGFI…FIYS), 212–232 (LQTL…KLKN), 240–260 (YVID…FFII), 267–287 (IYDG…ASVV), 310–330 (YSLY…YVDG), 332–352 (IPVY…ELSY), and 377–397 (FIRM…LVGA). Active-site residues include S459, D581, and H584.

Belongs to the acyltransferase 3 family.

It localises to the cell membrane. This is Putative O-acetyltransferase SAR0937 from Staphylococcus aureus (strain MRSA252).